A 236-amino-acid chain; its full sequence is Leucyl/phenylalanyl-tRNA--protein transferase (236 aa).

This sequence belongs to the L/F-transferase family.

It is found in the cytoplasm. The enzyme catalyses N-terminal L-lysyl-[protein] + L-leucyl-tRNA(Leu) = N-terminal L-leucyl-L-lysyl-[protein] + tRNA(Leu) + H(+). The catalysed reaction is N-terminal L-arginyl-[protein] + L-leucyl-tRNA(Leu) = N-terminal L-leucyl-L-arginyl-[protein] + tRNA(Leu) + H(+). It carries out the reaction L-phenylalanyl-tRNA(Phe) + an N-terminal L-alpha-aminoacyl-[protein] = an N-terminal L-phenylalanyl-L-alpha-aminoacyl-[protein] + tRNA(Phe). Functions in the N-end rule pathway of protein degradation where it conjugates Leu, Phe and, less efficiently, Met from aminoacyl-tRNAs to the N-termini of proteins containing an N-terminal arginine or lysine. This Idiomarina loihiensis (strain ATCC BAA-735 / DSM 15497 / L2-TR) protein is Leucyl/phenylalanyl-tRNA--protein transferase.